The chain runs to 140 residues: Nucleoside diphosphate kinase (140 aa).

Residues Lys-11, Phe-59, Arg-87, Thr-93, Arg-104, and Asn-114 each coordinate ATP. The Pros-phosphohistidine intermediate role is filled by His-117.

It belongs to the NDK family. In terms of assembly, homotetramer. Requires Mg(2+) as cofactor.

It localises to the cytoplasm. The catalysed reaction is a 2'-deoxyribonucleoside 5'-diphosphate + ATP = a 2'-deoxyribonucleoside 5'-triphosphate + ADP. The enzyme catalyses a ribonucleoside 5'-diphosphate + ATP = a ribonucleoside 5'-triphosphate + ADP. Major role in the synthesis of nucleoside triphosphates other than ATP. The ATP gamma phosphate is transferred to the NDP beta phosphate via a ping-pong mechanism, using a phosphorylated active-site intermediate. The chain is Nucleoside diphosphate kinase from Ruegeria pomeroyi (strain ATCC 700808 / DSM 15171 / DSS-3) (Silicibacter pomeroyi).